Consider the following 391-residue polypeptide: MAIFRDRTDKQVDHDRAIEDKRRHRQLVEKSIKENLGDILSEESIVGQSKNKKFKIPIKSIKEYQFVYGKNSKGVATGTGEEKRGDKIESGSKKAMGKGNKGAGNEEGDEVYETEITLDELMEYISDELNLPNLDEKKYSEIITDSCGKKKGYQRHGIRPRLAKKRTVMAKISRKQSKKRALIEEGKDYKTERFPFREEDLRYYKVKMQPKKASNAVMIFIMDASGSMDSTKKYLARSYFFVLSRFLKRKYNNIAFEFIYHTTVAKRVSEYEFFHKSESGGTYISSGIVEAINLIDEKYPPSEWNIYPVYASDGDNWSEDNIKAIESVKEICKISNMFGYAELLPSTYTQTMYYKFNKEINEKNFISVVIKEKKDLWEALKTMLKQELKED.

2 disordered regions span residues 1–23 (MAIF…DKRR) and 75–107 (VATG…GNEE). Positions 80 to 92 (GEEKRGDKIESGS) are enriched in basic and acidic residues.

This sequence belongs to the UPF0229 family.

In Clostridium botulinum (strain Alaska E43 / Type E3), this protein is UPF0229 protein CLH_2838.